A 236-amino-acid chain; its full sequence is Proteasome subunit beta type-1 (236 aa).

The protein belongs to the peptidase T1B family. As to quaternary structure, the 26S proteasome consists of a 20S proteasome core and two 19S regulatory subunits. The 20S proteasome core is composed of 28 subunits that are arranged in four stacked rings, resulting in a barrel-shaped structure. The two end rings are each formed by seven alpha subunits, and the two central rings are each formed by seven beta subunits. The catalytic chamber with the active sites is on the inside of the barrel.

It is found in the cytoplasm. The protein resides in the nucleus. Non-catalytic component of the proteasome, a multicatalytic proteinase complex which is characterized by its ability to cleave peptides with Arg, Phe, Tyr, Leu, and Glu adjacent to the leaving group at neutral or slightly basic pH. The proteasome has an ATP-dependent proteolytic activity. The polypeptide is Proteasome subunit beta type-1 (psmB1) (Dictyostelium discoideum (Social amoeba)).